Here is a 232-residue protein sequence, read N- to C-terminus: 2-C-methyl-D-erythritol 4-phosphate cytidylyltransferase (232 aa).

Belongs to the IspD/TarI cytidylyltransferase family. IspD subfamily.

It carries out the reaction 2-C-methyl-D-erythritol 4-phosphate + CTP + H(+) = 4-CDP-2-C-methyl-D-erythritol + diphosphate. It participates in isoprenoid biosynthesis; isopentenyl diphosphate biosynthesis via DXP pathway; isopentenyl diphosphate from 1-deoxy-D-xylulose 5-phosphate: step 2/6. Functionally, catalyzes the formation of 4-diphosphocytidyl-2-C-methyl-D-erythritol from CTP and 2-C-methyl-D-erythritol 4-phosphate (MEP). This Nitrosospira multiformis (strain ATCC 25196 / NCIMB 11849 / C 71) protein is 2-C-methyl-D-erythritol 4-phosphate cytidylyltransferase.